The sequence spans 267 residues: Matrilysin (267 aa).

Residues methionine 1–alanine 17 form the signal peptide. A propeptide spans leucine 18–glutamate 94 (activation peptide). Positions proline 85–valine 92 match the Cysteine switch motif. Residue cysteine 87 coordinates Zn(2+). Aspartate 153 contacts Ca(2+). Positions 163 and 165 each coordinate Zn(2+). The Ca(2+) site is built by aspartate 170, glycine 171, glycine 173, and threonine 175. Histidine 178 serves as a coordination point for Zn(2+). Residues glycine 185, glycine 187, and aspartate 189 each contribute to the Ca(2+) site. Histidine 191 lines the Zn(2+) pocket. Residues aspartate 193 and glutamate 196 each coordinate Ca(2+). Histidine 214 serves as a coordination point for Zn(2+). The active site involves glutamate 215. Residues histidine 218 and histidine 224 each contribute to the Zn(2+) site.

This sequence belongs to the peptidase M10A family. Ca(2+) serves as cofactor. It depends on Zn(2+) as a cofactor.

The protein resides in the secreted. The protein localises to the extracellular space. It is found in the extracellular matrix. The enzyme catalyses Cleavage of 14-Ala-|-Leu-15 and 16-Tyr-|-Leu-17 in B chain of insulin. No action on collagen types I, II, IV, V. Cleaves gelatin chain alpha2(I) &gt; alpha1(I).. Degrades casein, gelatins of types I, III, IV, and V, and fibronectin. Activates procollagenase. In Homo sapiens (Human), this protein is Matrilysin (MMP7).